Consider the following 285-residue polypeptide: Chemotaxis protein LafT (285 aa).

Helical transmembrane passes span 4 to 23, 34 to 51, 171 to 191, and 201 to 222; these read FLGV…WAGG, FLII…GNPP, ALPG…MQAI, and HVAA…GLDP. At 223–285 the chain is on the cytoplasmic side; it reads LSNAMAQRVK…MEKWLAEQEG (63 aa).

This sequence belongs to the MotA family.

It localises to the cell inner membrane. Functionally, required for rotation of the flagellar motor. Probable transmembrane proton channel. This chain is Chemotaxis protein LafT (lafT), found in Vibrio parahaemolyticus serotype O3:K6 (strain RIMD 2210633).